The primary structure comprises 286 residues: 4-diphosphocytidyl-2-C-methyl-D-erythritol kinase (286 aa).

Lys11 is a catalytic residue. 94-104 (PMGGGIGGGSS) is an ATP binding site. Asp136 is a catalytic residue.

It belongs to the GHMP kinase family. IspE subfamily.

The catalysed reaction is 4-CDP-2-C-methyl-D-erythritol + ATP = 4-CDP-2-C-methyl-D-erythritol 2-phosphate + ADP + H(+). Its pathway is isoprenoid biosynthesis; isopentenyl diphosphate biosynthesis via DXP pathway; isopentenyl diphosphate from 1-deoxy-D-xylulose 5-phosphate: step 3/6. Functionally, catalyzes the phosphorylation of the position 2 hydroxy group of 4-diphosphocytidyl-2C-methyl-D-erythritol. This is 4-diphosphocytidyl-2-C-methyl-D-erythritol kinase from Pseudomonas putida (strain ATCC 700007 / DSM 6899 / JCM 31910 / BCRC 17059 / LMG 24140 / F1).